The following is a 347-amino-acid chain: Probable G-protein coupled receptor 148 (347 aa).

Over 1 to 51 the chain is Extracellular; that stretch reads MGDELAPCPVGTTAWPALIQLISKTPCMPQAASNTSLGLGDLRVPSSMLYW. N-linked (GlcNAc...) asparagine glycosylation occurs at asparagine 34. Residues 52-72 traverse the membrane as a helical segment; the sequence is LFLPSSLLAAATLAVSPLLLV. Residues 73–85 are Cytoplasmic-facing; sequence TILRNQRLRQEPH. The chain crosses the membrane as a helical span at residues 86–106; sequence YLLPANILLSDLAYILLHMLI. Residues 107–130 lie on the Extracellular side of the membrane; the sequence is SSSSLGGWELGRMACGILTDAVFA. The chain crosses the membrane as a helical span at residues 131-151; it reads ACTSTILSFTAIVLHTYLAVI. Residues 152-165 are Cytoplasmic-facing; it reads HPLRYLSFMSHGAA. A helical membrane pass occupies residues 166–186; sequence WKAVALIWLVACCFPTFLIWL. The Extracellular portion of the chain corresponds to 187–214; sequence SKWQDAQLEEQGASYILPPSMGTQPGCG. A helical membrane pass occupies residues 215–235; the sequence is LLVIVTYTSILCVLFLCTALI. Over 236–261 the chain is Cytoplasmic; that stretch reads ANCFWRIYAEAKTSGIWGQGYSRARG. Residues 262–282 traverse the membrane as a helical segment; the sequence is TLLIHSVLITLYVSTGVVFSL. Residues 283–299 lie on the Extracellular side of the membrane; the sequence is DMVLTRYHHIDSGTHTW. The chain crosses the membrane as a helical span at residues 300 to 322; the sequence is LLAANSEVLMMLPRAMLTYLYLL. The Cytoplasmic segment spans residues 323–347; that stretch reads RYRQLLGMVRGHLPSRRHQAIFTIS.

This sequence belongs to the G-protein coupled receptor 1 family. As to expression, expression restricted to nervous system and testis. Is also detected in several tumors types, most notably prostate cancer.

It is found in the cell membrane. In terms of biological role, orphan receptor. The sequence is that of Probable G-protein coupled receptor 148 (GPR148) from Homo sapiens (Human).